Consider the following 610-residue polypeptide: Elongation factor 4 (610 aa).

One can recognise a tr-type G domain in the interval 11–193 (ENIRNFSIIA…QIVEKVPAPS (183 aa)). GTP is bound by residues 23-28 (DHGKST) and 140-143 (NKID).

This sequence belongs to the TRAFAC class translation factor GTPase superfamily. Classic translation factor GTPase family. LepA subfamily.

Its subcellular location is the cell membrane. It catalyses the reaction GTP + H2O = GDP + phosphate + H(+). Its function is as follows. Required for accurate and efficient protein synthesis under certain stress conditions. May act as a fidelity factor of the translation reaction, by catalyzing a one-codon backward translocation of tRNAs on improperly translocated ribosomes. Back-translocation proceeds from a post-translocation (POST) complex to a pre-translocation (PRE) complex, thus giving elongation factor G a second chance to translocate the tRNAs correctly. Binds to ribosomes in a GTP-dependent manner. The protein is Elongation factor 4 of Streptococcus equi subsp. zooepidemicus (strain MGCS10565).